The chain runs to 128 residues: Large ribosomal subunit protein bL20c (128 aa).

The protein belongs to the bacterial ribosomal protein bL20 family.

It localises to the plastid. Its function is as follows. Binds directly to 23S ribosomal RNA and is necessary for the in vitro assembly process of the 50S ribosomal subunit. It is not involved in the protein synthesizing functions of that subunit. In Lathraea clandestina (Purple toothwort), this protein is Large ribosomal subunit protein bL20c (rpl20).